Consider the following 83-residue polypeptide: Beta-defensin 19 (83 aa).

The first 19 residues, 1-19 (MRLALLLLAILVATELVVS), serve as a signal peptide directing secretion. Disulfide bonds link Cys-27–Cys-54, Cys-34–Cys-48, and Cys-38–Cys-55.

This sequence belongs to the beta-defensin family. Specifically expressed in male gonads (Sertoli cells).

Its subcellular location is the secreted. Its function is as follows. Has antibacterial activity. This Mus musculus (Mouse) protein is Beta-defensin 19 (Defb19).